Here is a 524-residue protein sequence, read N- to C-terminus: Ribonuclease Y (524 aa).

A helical transmembrane segment spans residues 7-27 (LGGLLTGIVIAIIASIIASVI). The region spanning 214–299 (TVSVVPLPND…EMVEKARKEV (86 aa)) is the KH domain. One can recognise an HD domain in the interval 340-433 (VLSHSIEVAR…VQAADSISAA (94 aa)).

Belongs to the RNase Y family.

It localises to the cell membrane. Endoribonuclease that initiates mRNA decay. The polypeptide is Ribonuclease Y (Acetivibrio thermocellus (strain ATCC 27405 / DSM 1237 / JCM 9322 / NBRC 103400 / NCIMB 10682 / NRRL B-4536 / VPI 7372) (Clostridium thermocellum)).